A 32-amino-acid polypeptide reads, in one-letter code: Dermatoxin-J2 (32 aa).

A Glutamine amide modification is found at glutamine 32.

In terms of tissue distribution, expressed by the skin glands.

The protein localises to the secreted. Its function is as follows. Antimicrobial peptide. This is Dermatoxin-J2 from Phasmahyla jandaia (Jandaia leaf frog).